An 86-amino-acid polypeptide reads, in one-letter code: Phosphocarrier protein HPr (86 aa).

The HPr domain maps to 1–86 (MVKKEAIIKA…LAELIESFKE (86 aa)). The active-site Pros-phosphohistidine intermediate is the His-15.

This sequence belongs to the HPr family.

It is found in the cytoplasm. Its function is as follows. General (non sugar-specific) component of the phosphoenolpyruvate-dependent sugar phosphotransferase system (sugar PTS). This major carbohydrate active-transport system catalyzes the phosphorylation of incoming sugar substrates concomitantly with their translocation across the cell membrane. The phosphoryl group from phosphoenolpyruvate (PEP) is transferred to the phosphoryl carrier protein HPr by enzyme I. Phospho-HPr then transfers it to the PTS EIIA domain. The chain is Phosphocarrier protein HPr (ptsH) from Borreliella burgdorferi (strain ATCC 35210 / DSM 4680 / CIP 102532 / B31) (Borrelia burgdorferi).